Here is a 421-residue protein sequence, read N- to C-terminus: Gamma-glutamyl phosphate reductase (421 aa).

It belongs to the gamma-glutamyl phosphate reductase family.

Its subcellular location is the cytoplasm. It carries out the reaction L-glutamate 5-semialdehyde + phosphate + NADP(+) = L-glutamyl 5-phosphate + NADPH + H(+). It participates in amino-acid biosynthesis; L-proline biosynthesis; L-glutamate 5-semialdehyde from L-glutamate: step 2/2. Its function is as follows. Catalyzes the NADPH-dependent reduction of L-glutamate 5-phosphate into L-glutamate 5-semialdehyde and phosphate. The product spontaneously undergoes cyclization to form 1-pyrroline-5-carboxylate. The polypeptide is Gamma-glutamyl phosphate reductase (Pseudomonas fluorescens (strain SBW25)).